We begin with the raw amino-acid sequence, 834 residues long: Periplasmic nitrate reductase (834 aa).

The segment at residues 1–29 is a signal peptide (tat-type signal); that stretch reads MKLSRREFAKANAAAIAAAAAGLPLASTA. A 4Fe-4S Mo/W bis-MGD-type domain is found at 41-97; sequence LDWNKAPCRFCGTGCSVMVATRDNRVVATHGDVKAEVNRGLNCVKGYFLSKIMYGVD. Residues C48, C51, C55, and C83 each coordinate [4Fe-4S] cluster. Mo-bis(molybdopterin guanine dinucleotide)-binding positions include K85, Q152, N177, C181, 214-221, 245-249, 264-266, M375, Q379, N485, 511-512, K534, D561, and 721-730; these read WGSNMAEM, STFEH, QTD, SD, and TGRVLEHWHT. Substrate is bound at residue F797. Mo-bis(molybdopterin guanine dinucleotide) is bound by residues N805 and K822.

The protein belongs to the prokaryotic molybdopterin-containing oxidoreductase family. NasA/NapA/NarB subfamily. Component of the periplasmic nitrate reductase NapAB complex composed of NapA and NapB. Requires [4Fe-4S] cluster as cofactor. The cofactor is Mo-bis(molybdopterin guanine dinucleotide). Predicted to be exported by the Tat system. The position of the signal peptide cleavage has not been experimentally proven.

It is found in the periplasm. The catalysed reaction is 2 Fe(II)-[cytochrome] + nitrate + 2 H(+) = 2 Fe(III)-[cytochrome] + nitrite + H2O. In terms of biological role, catalytic subunit of the periplasmic nitrate reductase complex NapAB. Receives electrons from NapB and catalyzes the reduction of nitrate to nitrite. This Ectopseudomonas mendocina (strain ymp) (Pseudomonas mendocina) protein is Periplasmic nitrate reductase.